Here is a 264-residue protein sequence, read N- to C-terminus: DNA repair protein RecO (264 aa).

This sequence belongs to the RecO family.

Its function is as follows. Involved in DNA repair and RecF pathway recombination. This chain is DNA repair protein RecO, found in Chlorobium luteolum (strain DSM 273 / BCRC 81028 / 2530) (Pelodictyon luteolum).